The chain runs to 257 residues: Thiazole synthase (257 aa).

Lysine 96 acts as the Schiff-base intermediate with DXP in catalysis. Residues glycine 157, 184 to 185, and 206 to 207 each bind 1-deoxy-D-xylulose 5-phosphate; these read AG and NT.

It belongs to the ThiG family. In terms of assembly, homotetramer. Forms heterodimers with either ThiH or ThiS.

It is found in the cytoplasm. It carries out the reaction [ThiS sulfur-carrier protein]-C-terminal-Gly-aminoethanethioate + 2-iminoacetate + 1-deoxy-D-xylulose 5-phosphate = [ThiS sulfur-carrier protein]-C-terminal Gly-Gly + 2-[(2R,5Z)-2-carboxy-4-methylthiazol-5(2H)-ylidene]ethyl phosphate + 2 H2O + H(+). It functions in the pathway cofactor biosynthesis; thiamine diphosphate biosynthesis. Functionally, catalyzes the rearrangement of 1-deoxy-D-xylulose 5-phosphate (DXP) to produce the thiazole phosphate moiety of thiamine. Sulfur is provided by the thiocarboxylate moiety of the carrier protein ThiS. In vitro, sulfur can be provided by H(2)S. In Rhizobium etli (strain ATCC 51251 / DSM 11541 / JCM 21823 / NBRC 15573 / CFN 42), this protein is Thiazole synthase.